Here is a 362-residue protein sequence, read N- to C-terminus: Outer membrane porin F (362 aa).

Positions 1–22 are cleaved as a signal peptide; sequence MMKRNILAVIVPALLVAGTANA.

This sequence belongs to the Gram-negative porin family. As to quaternary structure, homotrimer. Forms mixed heterotrimers with OmpC; other mixed heterotrimers are also probable.

It localises to the cell outer membrane. Its function is as follows. Forms pores that allow passive diffusion of small molecules across the outer membrane. Functionally, (Microbial infection) Is the major receptor for colicin E5. In terms of biological role, (Microbial infection) A mixed OmpC-OmpF heterotrimer is the outer membrane receptor for toxin CdiA-EC536. The chain is Outer membrane porin F (ompF) from Escherichia coli O6:K15:H31 (strain 536 / UPEC).